The primary structure comprises 579 residues: Ribonucleoside-diphosphate reductase small chain (579 aa).

3 residues coordinate Fe cation: Asp130, Glu160, and His163. Residue Tyr167 is part of the active site. Fe cation contacts are provided by Glu225, Glu258, and His261. One can recognise a Fido domain in the interval 435–579 (DMTWTLKDVH…VSVFVDQFYR (145 aa)).

Belongs to the ribonucleoside diphosphate reductase small chain family. Heterotetramer composed of a homodimer of the large subunit (R1) and a homodimer of the small subunit (R2). Larger multisubunit protein complex are also active, composed of (R1)n(R2)n. It depends on Fe cation as a cofactor.

It carries out the reaction a 2'-deoxyribonucleoside 5'-diphosphate + [thioredoxin]-disulfide + H2O = a ribonucleoside 5'-diphosphate + [thioredoxin]-dithiol. Its function is as follows. Ribonucleoside-diphosphate reductase holoenzyme provides the precursors necessary for viral DNA synthesis. Allows virus growth in non-dividing cells. Catalyzes the biosynthesis of deoxyribonucleotides from the corresponding ribonucleotides. The sequence is that of Ribonucleoside-diphosphate reductase small chain from Magallana gigas (Pacific oyster).